The following is a 161-amino-acid chain: Arachidonate 5-lipoxygenase-activating protein (161 aa).

The Lumenal portion of the chain corresponds to 1–8; it reads MDQEAVGN. Residues 9-30 form a helical membrane-spanning segment; it reads VVLLAIVTLISVVQNAFFAHKV. At 31 to 52 the chain is on the cytoplasmic side; that stretch reads ELESKAQSGRSFQRTGTLAFER. The helical transmembrane segment at 53 to 77 threads the bilayer; that stretch reads VYTANQNCVDAYPTFLVVLWTAGLL. Topologically, residues 78–80 are lumenal; the sequence is CSQ. Residues 81-102 traverse the membrane as a helical segment; that stretch reads VPAAFAGLMYLFVRQKYFVGYL. The Cytoplasmic segment spans residues 103–107; it reads GERTQ. An intramembrane segment occupies 108–115; it reads STPGYIFG. Residues 116–128 form a helical membrane-spanning segment; that stretch reads KRIILFLFLMSLA. Residues 129–161 are Lumenal-facing; it reads GILNHYLIFFFGSDFENYIRTITTTISPLLLIP.

The protein belongs to the MAPEG family. In terms of assembly, homotrimer. Interacts with LTC4S and ALOX5.

The protein resides in the nucleus membrane. It is found in the endoplasmic reticulum membrane. In terms of biological role, required for leukotriene biosynthesis by ALOX5 (5-lipoxygenase). Anchors ALOX5 to the membrane. Binds arachidonic acid, and could play an essential role in the transfer of arachidonic acid to ALOX5. Binds to MK-886, a compound that blocks the biosynthesis of leukotrienes. The protein is Arachidonate 5-lipoxygenase-activating protein (Alox5ap) of Rattus norvegicus (Rat).